The sequence spans 418 residues: Replication factor C large subunit (418 aa).

47–54 serves as a coordination point for ATP; sequence GSQGTGKT.

It belongs to the activator 1 small subunits family. RfcL subfamily. Heteromultimer composed of small subunits (RfcS) and large subunits (RfcL).

Functionally, part of the RFC clamp loader complex which loads the PCNA sliding clamp onto DNA. The protein is Replication factor C large subunit of Thermoplasma acidophilum (strain ATCC 25905 / DSM 1728 / JCM 9062 / NBRC 15155 / AMRC-C165).